Consider the following 34-residue polypeptide: Antimicrobial peptide Alo-2 (34 aa).

Disulfide bonds link Cys1–Cys18, Cys8–Cys22, and Cys17–Cys33.

It is found in the secreted. Its function is as follows. Has antifungal activity against C.glabrata. The protein is Antimicrobial peptide Alo-2 of Acrocinus longimanus (Giant harlequin beetle).